The following is a 244-amino-acid chain: Biosynthetic peptidoglycan transglycosylase (244 aa).

Residues 25 to 45 (LLLLLTAALLYQSWFLLHIVY) form a helical membrane-spanning segment.

It belongs to the glycosyltransferase 51 family.

The protein localises to the cell inner membrane. The catalysed reaction is [GlcNAc-(1-&gt;4)-Mur2Ac(oyl-L-Ala-gamma-D-Glu-L-Lys-D-Ala-D-Ala)](n)-di-trans,octa-cis-undecaprenyl diphosphate + beta-D-GlcNAc-(1-&gt;4)-Mur2Ac(oyl-L-Ala-gamma-D-Glu-L-Lys-D-Ala-D-Ala)-di-trans,octa-cis-undecaprenyl diphosphate = [GlcNAc-(1-&gt;4)-Mur2Ac(oyl-L-Ala-gamma-D-Glu-L-Lys-D-Ala-D-Ala)](n+1)-di-trans,octa-cis-undecaprenyl diphosphate + di-trans,octa-cis-undecaprenyl diphosphate + H(+). It participates in cell wall biogenesis; peptidoglycan biosynthesis. Functionally, peptidoglycan polymerase that catalyzes glycan chain elongation from lipid-linked precursors. This Nitrosomonas europaea (strain ATCC 19718 / CIP 103999 / KCTC 2705 / NBRC 14298) protein is Biosynthetic peptidoglycan transglycosylase.